Here is a 117-residue protein sequence, read N- to C-terminus: Small ribosomal subunit protein eS25 (117 aa).

The tract at residues 1–34 (MPPKKDPKGGKAPPSKKKEGSGGGKAKKKKWSKG) is disordered. The segment covering 25 to 34 (KAKKKKWSKG) has biased composition (basic residues).

It belongs to the eukaryotic ribosomal protein eS25 family.

In Caenorhabditis elegans, this protein is Small ribosomal subunit protein eS25 (rps-25).